The following is a 193-amino-acid chain: Ribosomal RNA small subunit methyltransferase G (193 aa).

S-adenosyl-L-methionine is bound by residues glycine 72, phenylalanine 77, 123-124 (IE), and arginine 137.

It belongs to the methyltransferase superfamily. RNA methyltransferase RsmG family.

It localises to the cytoplasm. It catalyses the reaction guanosine(527) in 16S rRNA + S-adenosyl-L-methionine = N(7)-methylguanosine(527) in 16S rRNA + S-adenosyl-L-homocysteine. In terms of biological role, specifically methylates the N7 position of guanine in position 527 of 16S rRNA. The chain is Ribosomal RNA small subunit methyltransferase G from Wolinella succinogenes (strain ATCC 29543 / DSM 1740 / CCUG 13145 / JCM 31913 / LMG 7466 / NCTC 11488 / FDC 602W) (Vibrio succinogenes).